The following is a 599-amino-acid chain: Zinc finger BED domain-containing protein 3 (599 aa).

The tract at residues 70–104 is disordered; the sequence is LNGGMGSPGNGPGTPLSRNNYAHHHQQHQNQQHVG. Gly residues predominate over residues 72–81; sequence GGMGSPGNGP. The segment at 123–176 adopts a BED-type zinc-finger fold; the sequence is VKTAKVWRYFDELPTIEQAAECRICRKKIKATNSSTTGMIRHLRSCHVQEYQLV. The Zn(2+) site is built by Cys-144, Cys-147, His-164, and His-169. Disordered regions lie at residues 208-283 and 440-491; these read GIEN…QCQN and ATSS…SSID. Composition is skewed to low complexity over residues 223–246 and 268–283; these read SQKSPSASSSASDTASSASSSHFS and SNSILNLSQSQNQCQN. Over residues 440-455 the composition is skewed to polar residues; that stretch reads ATSSYEDVSVNESQMA. The span at 460 to 483 shows a compositional bias: acidic residues; sequence GDEEEEIMEEEVEEDENVEIEDDT.

Expressed in neuronal cell bodies in the ventral cord and HSN neurons.

The protein localises to the nucleus. Functionally, probable transcription factor. Involved in vulval organogenesis. During vulval development, may play a role in the regulation of cell cycle regulators such as cul-1. Positively modulates expression of homeobox protein lin-39, perhaps by binding to regulatory regions of the lin-39 gene, acting in the vulval lineage. Plays a role in larval molting. This chain is Zinc finger BED domain-containing protein 3, found in Caenorhabditis elegans.